We begin with the raw amino-acid sequence, 900 residues long: Alanine--tRNA ligase (900 aa).

The Zn(2+) site is built by H604, H608, C708, and H712.

This sequence belongs to the class-II aminoacyl-tRNA synthetase family. Requires Zn(2+) as cofactor.

Its subcellular location is the cytoplasm. It carries out the reaction tRNA(Ala) + L-alanine + ATP = L-alanyl-tRNA(Ala) + AMP + diphosphate. Its function is as follows. Catalyzes the attachment of alanine to tRNA(Ala) in a two-step reaction: alanine is first activated by ATP to form Ala-AMP and then transferred to the acceptor end of tRNA(Ala). Also edits incorrectly charged Ser-tRNA(Ala) and Gly-tRNA(Ala) via its editing domain. The polypeptide is Alanine--tRNA ligase (Saccharolobus islandicus (strain L.S.2.15 / Lassen #1) (Sulfolobus islandicus)).